A 190-amino-acid polypeptide reads, in one-letter code: Glutathione peroxidase 2 (190 aa).

Sec-40 is a catalytic residue. Residue Sec-40 is a non-standard amino acid, selenocysteine.

The protein belongs to the glutathione peroxidase family. Homotetramer. As to expression, exclusively expressed in the stomach and small intestine.

It localises to the cytoplasm. It is found in the cytosol. The catalysed reaction is 2 glutathione + H2O2 = glutathione disulfide + 2 H2O. The enzyme catalyses a hydroperoxy polyunsaturated fatty acid + 2 glutathione = a hydroxy polyunsaturated fatty acid + glutathione disulfide + H2O. It carries out the reaction tert-butyl hydroperoxide + 2 glutathione = tert-butanol + glutathione disulfide + H2O. It catalyses the reaction cumene hydroperoxide + 2 glutathione = 2-phenylpropan-2-ol + glutathione disulfide + H2O. The catalysed reaction is (13S)-hydroperoxy-(9Z,11E)-octadecadienoate + 2 glutathione = (13S)-hydroxy-(9Z,11E)-octadecadienoate + glutathione disulfide + H2O. The enzyme catalyses (5S)-hydroperoxy-(6E,8Z,11Z,14Z)-eicosatetraenoate + 2 glutathione = (5S)-hydroxy-(6E,8Z,11Z,14Z)-eicosatetraenoate + glutathione disulfide + H2O. It carries out the reaction (12R)-hydroperoxy-(5Z,8Z,10E,14Z)-eicosatetraenoate + 2 glutathione = (12R)-hydroxy-(5Z,8Z,10E,14Z)-eicosatetraenoate + glutathione disulfide + H2O. It catalyses the reaction (15S)-hydroperoxy-(5Z,8Z,11Z,13E)-eicosatetraenoate + 2 glutathione = (15S)-hydroxy-(5Z,8Z,11Z,13E)-eicosatetraenoate + glutathione disulfide + H2O. Catalyzes the reduction of hydroperoxides in a glutathione-dependent manner thus regulating cellular redox homeostasis. Can reduce small soluble hydroperoxides such as H2O2, cumene hydroperoxide and tert-butyl hydroperoxide, as well as several fatty acid-derived hydroperoxides. Cannot reduce phosphatidycholine hydroperoxide. This is Glutathione peroxidase 2 (GPX2) from Macaca fuscata fuscata (Japanese macaque).